Consider the following 255-residue polypeptide: tRNA (guanine-N(7)-)-methyltransferase (255 aa).

4 residues coordinate S-adenosyl-L-methionine: Glu86, Glu111, Asp138, and Asp161. Asp161 is an active-site residue. Substrate contacts are provided by residues Lys165, Asp197, and 234–237 (TKFE).

The protein belongs to the class I-like SAM-binding methyltransferase superfamily. TrmB family.

The catalysed reaction is guanosine(46) in tRNA + S-adenosyl-L-methionine = N(7)-methylguanosine(46) in tRNA + S-adenosyl-L-homocysteine. It participates in tRNA modification; N(7)-methylguanine-tRNA biosynthesis. Its function is as follows. Catalyzes the formation of N(7)-methylguanine at position 46 (m7G46) in tRNA. This chain is tRNA (guanine-N(7)-)-methyltransferase, found in Pasteurella multocida (strain Pm70).